The primary structure comprises 64 residues: Large ribosomal subunit protein eL37 (64 aa).

4 residues coordinate Zn(2+): cysteine 20, cysteine 23, cysteine 35, and cysteine 38. A C4-type zinc finger spans residues 20–38; that stretch reads CRRCGRRAFHVRKKVCAAC.

Belongs to the eukaryotic ribosomal protein eL37 family. Zn(2+) serves as cofactor.

Its function is as follows. Binds to the 23S rRNA. The polypeptide is Large ribosomal subunit protein eL37 (Methanococcus maripaludis (strain C6 / ATCC BAA-1332)).